Consider the following 386-residue polypeptide: tRNA-specific 2-thiouridylase MnmA (386 aa).

Residues 9–16 (GMSGGVDS) and Met35 contribute to the ATP site. Residues 95 to 97 (NPD) are interaction with target base in tRNA. The Nucleophile role is filled by Cys100. Cys100 and Cys196 are joined by a disulfide. Residue Gly124 coordinates ATP. The interaction with tRNA stretch occupies residues 146-148 (KDQ). The Cysteine persulfide intermediate role is filled by Cys196. The interaction with tRNA stretch occupies residues 308–309 (RY).

It belongs to the MnmA/TRMU family.

The protein localises to the cytoplasm. The enzyme catalyses S-sulfanyl-L-cysteinyl-[protein] + uridine(34) in tRNA + AH2 + ATP = 2-thiouridine(34) in tRNA + L-cysteinyl-[protein] + A + AMP + diphosphate + H(+). Functionally, catalyzes the 2-thiolation of uridine at the wobble position (U34) of tRNA, leading to the formation of s(2)U34. The chain is tRNA-specific 2-thiouridylase MnmA from Burkholderia thailandensis (strain ATCC 700388 / DSM 13276 / CCUG 48851 / CIP 106301 / E264).